The sequence spans 192 residues: Protein LZIC (192 aa).

A coiled-coil region spans residues Lys-6–Ser-65.

Belongs to the CTNNBIP1 family.

In Dictyostelium discoideum (Social amoeba), this protein is Protein LZIC (lzic).